A 559-amino-acid chain; its full sequence is Non-homologous end joining factor IFFO1 (559 aa).

The segment at 21–57 is disordered; the sequence is GPLGDSLGGDHFAGGGDLPPAPLSPAGPAAYSPPGPG. Pro residues predominate over residues 39–57; the sequence is PPAPLSPAGPAAYSPPGPG. Residues 65-116 are LMNA binding; it reads ALRNDLGSNINVLKTLNLRFRCFLAKVHELERRNRLLEKQLQQALEEGKQGR. Residues 73–526 form the IF rod domain; the sequence is NINVLKTLNL…RLITQSGDRK (454 aa). Residues 85 to 117 adopt a coiled-coil conformation; the sequence is RCFLAKVHELERRNRLLEKQLQQALEEGKQGRR. A disordered region spans residues 158 to 187; that stretch reads SPARSPAGPLAPSAASLSSSSTSTSTTYSS. Positions 237 to 301 form a coiled coil; that stretch reads EIRALYNVLA…LKVEQLKAEL (65 aa). Residues 360-394 are disordered; that stretch reads SMGGRKRERKAAVEEDTSLSESEGPRQPDGDEEES. The segment at 450-525 is XCCR4 binding. Required for localization to the double-strand breaks (DSBs); that stretch reads EQEDSLEKVI…RRLITQSGDR (76 aa). The stretch at 455–501 forms a coiled coil; that stretch reads LEKVIKDTESLFKTREKEYQETIDQIELELATAKNDMNRHLHEYMEM. Positions 520–559 are disordered; it reads TQSGDRKSPAFTAVPLSDPPPPPSEAEDSDRDVSSDSSMR. Residues 550-559 are compositionally biased toward basic and acidic residues; the sequence is RDVSSDSSMR.

Belongs to the intermediate filament family. As to quaternary structure, forms a heterotetramer with XRCC4. The interaction with XRCC4 is direct, involves LIG4-free XRCC4 and leads to relocalization of IFFO1 at the double-strand break (DSB) sites. Interacts with LMNA; the interaction forms an interior nucleoskeleton and the recruitment to DNA double-strand breaks. As to expression, ubiquitously expressed.

The protein localises to the nucleus. The protein resides in the nucleoplasm. It localises to the nucleus inner membrane. Its subcellular location is the nucleus matrix. Functionally, nuclear matrix protein involved in the immobilization of broken DNA ends and the suppression of chromosome translocation during DNA double-strand breaks (DSBs). Interacts with the nuclear lamina component LMNA, resulting in the formation of a nucleoskeleton that relocalizes to the DSB sites in a XRCC4-dependent manner and promotes the immobilization of the broken ends, thereby preventing chromosome translocation. Acts as a scaffold that allows the DNA repair protein XRCC4 and LMNA to assemble into a complex at the DSB sites. The polypeptide is Non-homologous end joining factor IFFO1 (Homo sapiens (Human)).